A 343-amino-acid chain; its full sequence is Lactamase-like protein nscB (343 aa).

Zn(2+)-binding residues include histidine 118, histidine 120, aspartate 122, and histidine 123. Catalysis depends on aspartate 122, which acts as the Proton donor/acceptor.

The protein belongs to the metallo-beta-lactamase superfamily. Zn(2+) is required as a cofactor.

It participates in secondary metabolite biosynthesis. In terms of biological role, lactamase-like protein; part of the gene cluster that mediates the biosynthesis of neosartoricin B, a prenylated anthracenone that probably exhibits T-cell antiproliferative activity, suggestive of a physiological role as an immunosuppressive agent. The non-reducing polyketide synthase nscA probably synthesizes and cyclizes the decaketide backbone. The hydrolase nscB then mediates the product release through hydrolysis followed by spontaneous decarboxylation. The prenyltransferase nscD catalyzes the addition of the dimethylallyl group to the aromatic C5. The FAD-dependent monooxygenase nscC is then responsible for the stereospecific hydroxylation at C2. Neosartoricin B can be converted into two additional compounds neosartoricins C and D. Neosartoricin C is a spirocyclic compound that is cyclized through the attack of C3 hydroxyl on C14, followed by dehydration. On the other hand, neosartoricin D is a further cyclized compound in which attack of C2 on C14 in neosartoricin C results in the formation of the acetal-containing dioxabicyclo-octanone ring. Both of these compounds are novel and possibly represent related metabolites of the gene cluster. The polypeptide is Lactamase-like protein nscB (Arthroderma otae (strain ATCC MYA-4605 / CBS 113480) (Microsporum canis)).